The sequence spans 286 residues: Bifunctional protein FolD (286 aa).

NADP(+) contacts are provided by residues 166–168 and isoleucine 232; that span reads GAS.

It belongs to the tetrahydrofolate dehydrogenase/cyclohydrolase family. As to quaternary structure, homodimer.

It catalyses the reaction (6R)-5,10-methylene-5,6,7,8-tetrahydrofolate + NADP(+) = (6R)-5,10-methenyltetrahydrofolate + NADPH. It carries out the reaction (6R)-5,10-methenyltetrahydrofolate + H2O = (6R)-10-formyltetrahydrofolate + H(+). The protein operates within one-carbon metabolism; tetrahydrofolate interconversion. In terms of biological role, catalyzes the oxidation of 5,10-methylenetetrahydrofolate to 5,10-methenyltetrahydrofolate and then the hydrolysis of 5,10-methenyltetrahydrofolate to 10-formyltetrahydrofolate. The chain is Bifunctional protein FolD from Vibrio campbellii (strain ATCC BAA-1116).